We begin with the raw amino-acid sequence, 391 residues long: 3-ketoacyl-CoA thiolase (391 aa).

C95 acts as the Acyl-thioester intermediate in catalysis. Residues H347 and C377 each act as proton acceptor in the active site.

It belongs to the thiolase-like superfamily. Thiolase family. Heterotetramer of two alpha chains (FadB) and two beta chains (FadA).

Its subcellular location is the cytoplasm. It catalyses the reaction an acyl-CoA + acetyl-CoA = a 3-oxoacyl-CoA + CoA. The protein operates within lipid metabolism; fatty acid beta-oxidation. In terms of biological role, catalyzes the final step of fatty acid oxidation in which acetyl-CoA is released and the CoA ester of a fatty acid two carbons shorter is formed. In Pseudomonas putida (strain ATCC 700007 / DSM 6899 / JCM 31910 / BCRC 17059 / LMG 24140 / F1), this protein is 3-ketoacyl-CoA thiolase.